A 235-amino-acid chain; its full sequence is Purine nucleoside phosphorylase DeoD-type (235 aa).

His4 contacts a purine D-ribonucleoside. Phosphate contacts are provided by residues Gly20, Arg24, Arg43, and 87–90; that span reads RVGT. A purine D-ribonucleoside is bound by residues 178-180 and 202-203; these read EME and SD. The active-site Proton donor is Asp203.

This sequence belongs to the PNP/UDP phosphorylase family. Homohexamer; trimer of homodimers.

It carries out the reaction a purine D-ribonucleoside + phosphate = a purine nucleobase + alpha-D-ribose 1-phosphate. The enzyme catalyses a purine 2'-deoxy-D-ribonucleoside + phosphate = a purine nucleobase + 2-deoxy-alpha-D-ribose 1-phosphate. In terms of biological role, catalyzes the reversible phosphorolytic breakdown of the N-glycosidic bond in the beta-(deoxy)ribonucleoside molecules, with the formation of the corresponding free purine bases and pentose-1-phosphate. The chain is Purine nucleoside phosphorylase DeoD-type from Geobacillus sp. (strain WCH70).